We begin with the raw amino-acid sequence, 592 residues long: Glutamine--fructose-6-phosphate aminotransferase [isomerizing] (592 aa).

The active-site Nucleophile; for GATase activity is the Cys-2. The region spanning 2-217 (CGIVGYVGRD…DGEIADLTPD (216 aa)) is the Glutamine amidotransferase type-2 domain. SIS domains lie at 277-416 (IPFK…EREN) and 441-582 (VAEK…VDQP). Lys-587 acts as the For Fru-6P isomerization activity in catalysis.

As to quaternary structure, homodimer.

The protein resides in the cytoplasm. It catalyses the reaction D-fructose 6-phosphate + L-glutamine = D-glucosamine 6-phosphate + L-glutamate. Its function is as follows. Catalyzes the first step in hexosamine metabolism, converting fructose-6P into glucosamine-6P using glutamine as a nitrogen source. This is Glutamine--fructose-6-phosphate aminotransferase [isomerizing] from Aquifex aeolicus (strain VF5).